Here is a 145-residue protein sequence, read N- to C-terminus: Enhancer of mRNA-decapping protein 2 (145 aa).

2 disordered regions span residues 1-74 and 89-115; these read MGSE…DKAT and PKKK…IDSK. A compositionally biased stretch (polar residues) spans 29-42; sequence TKTQILVPPTQSLP. The span at 55-73 shows a compositional bias: basic and acidic residues; it reads QRREPRERTSKTGHEDDKA. Over residues 89 to 102 the composition is skewed to basic residues; it reads PKKKSCKYKKKKTR.

This sequence belongs to the EDC family.

It is found in the cytoplasm. Its subcellular location is the nucleus. MRNA-binding protein which stimulates mRNA decapping by DCP1 and DCP2. This Saccharomyces cerevisiae (strain ATCC 204508 / S288c) (Baker's yeast) protein is Enhancer of mRNA-decapping protein 2 (EDC2).